A 472-amino-acid chain; its full sequence is Ribulose bisphosphate carboxylase/oxygenase activase, chloroplastic (472 aa).

Residues 1–58 constitute a chloroplast transit peptide; sequence MATAVSTVGAATRAPLNLNGSSAGASVPTSGFLGSSLKKHTNVRFPSSSRTTSMTVKA. Position 163-170 (163-170) interacts with ATP; it reads GGKGQGKS. Positions 448–472 are disordered; sequence GCTDPEAKNYDPTARSDDGSCTYNL. The segment covering 452-465 has biased composition (basic and acidic residues); sequence PEAKNYDPTARSDD.

Belongs to the RuBisCO activase family.

The protein localises to the plastid. Its subcellular location is the chloroplast stroma. Functionally, activation of RuBisCO (ribulose-1,5-bisphosphate carboxylase/oxygenase; EC 4.1.1.39) involves the ATP-dependent carboxylation of the epsilon-amino group of lysine leading to a carbamate structure. The chain is Ribulose bisphosphate carboxylase/oxygenase activase, chloroplastic from Spinacia oleracea (Spinach).